The chain runs to 96 residues: uncharacterized protein (96 aa).

The N-terminal stretch at 1–19 (MKQIIPALITLSFSPMAIA) is a signal peptide.

This is an uncharacterized protein from Synechocystis sp. (strain ATCC 27184 / PCC 6803 / Kazusa).